The primary structure comprises 1211 residues: Homeodomain-interacting protein kinase 1 (1211 aa).

A Glycyl lysine isopeptide (Lys-Gly) (interchain with G-Cter in SUMO); alternate cross-link involves residue Lys25. Lys25 participates in a covalent cross-link: Glycyl lysine isopeptide (Lys-Gly) (interchain with G-Cter in SUMO2); alternate. Glycyl lysine isopeptide (Lys-Gly) (interchain with G-Cter in SUMO2) cross-links involve residues Lys120 and Lys124. The 329-residue stretch at 190–518 (YEVLEFLGRG…PLKTLNHQFV (329 aa)) folds into the Protein kinase domain. Residues 196-204 (LGRGTFGQV) and Lys219 contribute to the ATP site. Asp315 functions as the Proton acceptor in the catalytic mechanism. Positions 835-856 (QQQSSSLPSRKNKQSAPVSSTS) are disordered. A Nuclear localization signal 1 (NLS1) motif is present at residues 844–847 (RKNK). Ser872 is modified (phosphoserine). Positions 885-1094 (PVQDQHQPII…FQHGSPLHST (210 aa)) are interaction with TP53. Residues 891–998 (QPIIIPDTPS…PLKTQLGDCT (108 aa)) are required for localization to nuclear speckles. The SUMO interaction motifs (SIM); required for nuclear localization and kinase activity stretch occupies residues 902–926 (PVSVITIRSDTDEEEDNKFKPSSSS). Lys991 is covalently cross-linked (Glycyl lysine isopeptide (Lys-Gly) (interchain with G-Cter in SUMO2)). 3 disordered regions span residues 1002–1023 (QASG…GQSS), 1047–1070 (LSQN…APRR), and 1085–1105 (FQHG…APAH). 2 stretches are compositionally biased toward low complexity: residues 1048 to 1064 (SQNQ…ERSS) and 1096 to 1105 (HPHLAPAPAH). Position 1201 is a phosphoserine (Ser1201). Lys1204 is covalently cross-linked (Glycyl lysine isopeptide (Lys-Gly) (interchain with G-Cter in SUMO)).

This sequence belongs to the protein kinase superfamily. CMGC Ser/Thr protein kinase family. HIPK subfamily. As to quaternary structure, interacts with Nkx1-2, Nkx2-5, MYB, PARK7, DAXX and p53/TP53. Part of a cytoplasmic complex made of HIPK1, DAB2IP and MAP3K5 in response to TNF. This complex formation promotes MAP3K5-JNK activation and subsequent apoptosis. Phosphorylated and activated by JNK1. Autophosphorylated. Post-translationally, sumoylated. When conjugated it is directed to nuclear speckles. SENP1-mediated desumoylation is mediated by TNF in response to stress stimuli, triggering transient translocation from nucleus to cytoplasm.

The protein resides in the nucleus. It localises to the cytoplasm. It is found in the nucleus speckle. It carries out the reaction L-seryl-[protein] + ATP = O-phospho-L-seryl-[protein] + ADP + H(+). The enzyme catalyses L-threonyl-[protein] + ATP = O-phospho-L-threonyl-[protein] + ADP + H(+). In terms of biological role, serine/threonine-protein kinase involved in transcription regulation and TNF-mediated cellular apoptosis. Plays a role as a corepressor for homeodomain transcription factors. Phosphorylates DAXX and MYB. Phosphorylates DAXX in response to stress, and mediates its translocation from the nucleus to the cytoplasm. Inactivates MYB transcription factor activity by phosphorylation. Prevents MAP3K5-JNK activation in the absence of TNF. TNF triggers its translocation to the cytoplasm in response to stress stimuli, thus activating nuclear MAP3K5-JNK by derepression and promoting apoptosis. May be involved in anti-oxidative stress responses. Involved in the regulation of eye size, lens formation and retinal lamination during late embryogenesis. Promotes angiogenesis and to be involved in erythroid differentiation. May be involved in malignant squamous cell tumor formation. Phosphorylates PAGE4 at 'Thr-51' which is critical for the ability of PAGE4 to potentiate the transcriptional activator activity of JUN. The protein is Homeodomain-interacting protein kinase 1 of Rattus norvegicus (Rat).